The primary structure comprises 89 residues: Ribonuclease P protein component 1 (89 aa).

Belongs to the eukaryotic/archaeal RNase P protein component 1 family. As to quaternary structure, consists of a catalytic RNA component and at least 4-5 protein subunits.

It is found in the cytoplasm. The catalysed reaction is Endonucleolytic cleavage of RNA, removing 5'-extranucleotides from tRNA precursor.. Its function is as follows. Part of ribonuclease P, a protein complex that generates mature tRNA molecules by cleaving their 5'-ends. The polypeptide is Ribonuclease P protein component 1 (Thermoplasma volcanium (strain ATCC 51530 / DSM 4299 / JCM 9571 / NBRC 15438 / GSS1)).